A 288-amino-acid polypeptide reads, in one-letter code: Acetyl-coenzyme A carboxylase carboxyl transferase subunit beta (288 aa).

One can recognise a CoA carboxyltransferase N-terminal domain in the interval 32–288 (LLLICPKCKK…ILMLHNVEAR (257 aa)). Cys36, Cys39, Cys55, and Cys58 together coordinate Zn(2+). The C4-type zinc finger occupies 36-58 (CPKCKKTLLKSELADNLDVCREC).

This sequence belongs to the AccD/PCCB family. In terms of assembly, acetyl-CoA carboxylase is a heterohexamer composed of biotin carboxyl carrier protein (AccB), biotin carboxylase (AccC) and two subunits each of ACCase subunit alpha (AccA) and ACCase subunit beta (AccD). Requires Zn(2+) as cofactor.

It localises to the cytoplasm. The catalysed reaction is N(6)-carboxybiotinyl-L-lysyl-[protein] + acetyl-CoA = N(6)-biotinyl-L-lysyl-[protein] + malonyl-CoA. Its pathway is lipid metabolism; malonyl-CoA biosynthesis; malonyl-CoA from acetyl-CoA: step 1/1. In terms of biological role, component of the acetyl coenzyme A carboxylase (ACC) complex. Biotin carboxylase (BC) catalyzes the carboxylation of biotin on its carrier protein (BCCP) and then the CO(2) group is transferred by the transcarboxylase to acetyl-CoA to form malonyl-CoA. The sequence is that of Acetyl-coenzyme A carboxylase carboxyl transferase subunit beta from Ruminiclostridium cellulolyticum (strain ATCC 35319 / DSM 5812 / JCM 6584 / H10) (Clostridium cellulolyticum).